The chain runs to 432 residues: Glutamate-1-semialdehyde 2,1-aminomutase 2 (432 aa).

Position 268 is an N6-(pyridoxal phosphate)lysine (Lys-268).

Belongs to the class-III pyridoxal-phosphate-dependent aminotransferase family. HemL subfamily. In terms of assembly, homodimer. Pyridoxal 5'-phosphate is required as a cofactor.

Its subcellular location is the cytoplasm. It catalyses the reaction (S)-4-amino-5-oxopentanoate = 5-aminolevulinate. The protein operates within porphyrin-containing compound metabolism; protoporphyrin-IX biosynthesis; 5-aminolevulinate from L-glutamyl-tRNA(Glu): step 2/2. This chain is Glutamate-1-semialdehyde 2,1-aminomutase 2, found in Listeria monocytogenes serovar 1/2a (strain ATCC BAA-679 / EGD-e).